The chain runs to 266 residues: Phosphate import ATP-binding protein PstB 1 (266 aa).

The 244-residue stretch at 18-261 folds into the ABC transporter domain; it reads AQTSNLSFYY…PTNQLTEQYV (244 aa). Residue 50 to 57 participates in ATP binding; sequence GPSGCGKT.

The protein belongs to the ABC transporter superfamily. Phosphate importer (TC 3.A.1.7) family. In terms of assembly, the complex is composed of two ATP-binding proteins (PstB), two transmembrane proteins (PstC and PstA) and a solute-binding protein (PstS).

It localises to the cell inner membrane. It carries out the reaction phosphate(out) + ATP + H2O = ADP + 2 phosphate(in) + H(+). In terms of biological role, part of the ABC transporter complex PstSACB involved in phosphate import. Responsible for energy coupling to the transport system. The polypeptide is Phosphate import ATP-binding protein PstB 1 (Gloeobacter violaceus (strain ATCC 29082 / PCC 7421)).